Reading from the N-terminus, the 288-residue chain is Scolexin B (288 aa).

The N-terminal stretch at 1-20 (MFASKLAVCSALALLAVAHA) is a signal peptide. The 267-residue stretch at 21-287 (APGGNDIQKI…VRDWIKKVTN (267 aa)) folds into the Peptidase S1 domain. Residues 27–56 (IQKITKAPNVPTKAEGDAASKASAPAIPPK) are disordered. Cys72 and Cys88 are oxidised to a cystine. Active-site charge relay system residues include His87 and Asp145. 2 disulfide bridges follow: Cys210–Cys223 and Cys235–Cys264. The active-site Charge relay system is the Ser239.

It belongs to the peptidase S1 family.

The chain is Scolexin B from Heliothis virescens (Tobacco budworm moth).